We begin with the raw amino-acid sequence, 213 residues long: Ribonuclease HII (213 aa).

Positions His-27–Pro-213 constitute an RNase H type-2 domain. The a divalent metal cation site is built by Asp-33, Glu-34, and Asp-125.

This sequence belongs to the RNase HII family. The cofactor is Mn(2+). Mg(2+) serves as cofactor.

The protein resides in the cytoplasm. It carries out the reaction Endonucleolytic cleavage to 5'-phosphomonoester.. Endonuclease that specifically degrades the RNA of RNA-DNA hybrids. The protein is Ribonuclease HII of Geobacter metallireducens (strain ATCC 53774 / DSM 7210 / GS-15).